The sequence spans 177 residues: Myosin regulatory light chain 2 (177 aa).

Residues 1–16 are compositionally biased toward basic residues; sequence MSRKSGSRSSSKRSKK. Residues 1–24 form a disordered region; sequence MSRKSGSRSSSKRSKKSGGGSNVF. IgE-binding epitope regions lie at residues 13 to 30, 22 to 48, 49 to 66, 58 to 90, 79 to 99, and 118 to 141; these read RSKK…FTQR, NVFD…DKDG, VIGK…GRIA, TFDE…LLNM, PAPI…TGES, and NIDC…QEAD. The EF-hand 1 domain maps to 30-65; that stretch reads RQVAEFKEGFQLMDRDKDGVIGKTDLRGTFDEIGRI. Positions 43, 45, 47, and 54 each coordinate Ca(2+). Residues 135-170 enclose the EF-hand 2 domain; it reads FSSQEADDALDQMDIDDGGKIDVQGVIQMLTAGGGD.

Myosin is a hexamer of 2 heavy chains and 4 light chains. In terms of tissue distribution, expressed in tail muscle (at protein level).

In Penaeus vannamei (Whiteleg shrimp), this protein is Myosin regulatory light chain 2.